The primary structure comprises 105 residues: Toxin ParE2 (105 aa).

It belongs to the RelE toxin family.

In terms of biological role, toxic component of a type II toxin-antitoxin (TA) system. Its toxic effect is neutralized by coexpression with cognate antitoxin ParD2. The protein is Toxin ParE2 (parE2) of Mycobacterium tuberculosis (strain CDC 1551 / Oshkosh).